The chain runs to 122 residues: Histone H2B subacrosomal variant (122 aa).

Over residues 1 to 25 (MARNVTKRNKRCRGHQKAIYKKKSH) the composition is skewed to basic residues. The tract at residues 1-30 (MARNVTKRNKRCRGHQKAIYKKKSHSSSES) is disordered.

The protein belongs to the histone H2B family. As to expression, testis-specific. Restricted to the spermatid population of seminiferous epithelium. Not present in Sertoli cells, spermatogonia, spermatocytes or cells of the interstitial tissue (at protein level).

Its subcellular location is the cytoplasm. In terms of biological role, may act as an acrosome-nuclear docking protein in sperm. The protein is Histone H2B subacrosomal variant (SUBH2BV) of Bos taurus (Bovine).